Reading from the N-terminus, the 370-residue chain is Histidinol-phosphate aminotransferase 1 (370 aa).

Lysine 222 bears the N6-(pyridoxal phosphate)lysine mark.

Belongs to the class-II pyridoxal-phosphate-dependent aminotransferase family. Histidinol-phosphate aminotransferase subfamily. In terms of assembly, homodimer. Requires pyridoxal 5'-phosphate as cofactor.

It carries out the reaction L-histidinol phosphate + 2-oxoglutarate = 3-(imidazol-4-yl)-2-oxopropyl phosphate + L-glutamate. The protein operates within amino-acid biosynthesis; L-histidine biosynthesis; L-histidine from 5-phospho-alpha-D-ribose 1-diphosphate: step 7/9. The chain is Histidinol-phosphate aminotransferase 1 from Bacillus cereus (strain ZK / E33L).